A 227-amino-acid polypeptide reads, in one-letter code: MRNIILFAAGTLLLSGCVSTQNSDVVQDDPYYAPMYPEPNVEPAVANGSLFNTYLSNDLYADKKALRTGDIITVKLQESTQASKAAKTETDKQSDAKLDPVIGLGGLPVNIGGDSIQFGIGSDASFKGDSKSNQSNSLAGDISVNVMRVLPNGNLVIRGEKWLTLNSGEEFIRLEGLVRPEDVTADNTVQSNRIANARIQYSGKGQTQEAQSAGWLTRFFSSSLFPF.

Positions 1 to 16 (MRNIILFAAGTLLLSG) are cleaved as a signal peptide. Cysteine 17 is lipidated: N-palmitoyl cysteine. Cysteine 17 carries S-diacylglycerol cysteine lipidation.

The protein belongs to the FlgH family. The basal body constitutes a major portion of the flagellar organelle and consists of four rings (L,P,S, and M) mounted on a central rod.

It localises to the cell outer membrane. Its subcellular location is the bacterial flagellum basal body. Assembles around the rod to form the L-ring and probably protects the motor/basal body from shearing forces during rotation. In Pseudoalteromonas translucida (strain TAC 125), this protein is Flagellar L-ring protein.